Consider the following 330-residue polypeptide: D-cysteine desulfhydrase (330 aa).

Lys-52 bears the N6-(pyridoxal phosphate)lysine mark.

This sequence belongs to the ACC deaminase/D-cysteine desulfhydrase family. In terms of assembly, homodimer. Pyridoxal 5'-phosphate serves as cofactor.

The catalysed reaction is D-cysteine + H2O = hydrogen sulfide + pyruvate + NH4(+) + H(+). Its function is as follows. Catalyzes the alpha,beta-elimination reaction of D-cysteine and of several D-cysteine derivatives. It could be a defense mechanism against D-cysteine. This is D-cysteine desulfhydrase from Yersinia enterocolitica serotype O:8 / biotype 1B (strain NCTC 13174 / 8081).